Here is a 171-residue protein sequence, read N- to C-terminus: 3-hydroxydecanoyl-[acyl-carrier-protein] dehydratase (171 aa).

Residue H70 is part of the active site.

Belongs to the thioester dehydratase family. FabA subfamily. Homodimer.

Its subcellular location is the cytoplasm. It catalyses the reaction a (3R)-hydroxyacyl-[ACP] = a (2E)-enoyl-[ACP] + H2O. The enzyme catalyses (3R)-hydroxydecanoyl-[ACP] = (2E)-decenoyl-[ACP] + H2O. It carries out the reaction (2E)-decenoyl-[ACP] = (3Z)-decenoyl-[ACP]. Its pathway is lipid metabolism; fatty acid biosynthesis. Its function is as follows. Necessary for the introduction of cis unsaturation into fatty acids. Catalyzes the dehydration of (3R)-3-hydroxydecanoyl-ACP to E-(2)-decenoyl-ACP and then its isomerization to Z-(3)-decenoyl-ACP. Can catalyze the dehydratase reaction for beta-hydroxyacyl-ACPs with saturated chain lengths up to 16:0, being most active on intermediate chain length. This is 3-hydroxydecanoyl-[acyl-carrier-protein] dehydratase from Shewanella loihica (strain ATCC BAA-1088 / PV-4).